Reading from the N-terminus, the 87-residue chain is MSLLSFLIGEKKSTASVAKERLQIILAHERSGRNASRPDYLPALQRELLAVISKYVSIEPGDIKVHLERQDNLEVLEVKIELPDVQR.

The protein belongs to the MinE family.

Its function is as follows. Prevents the cell division inhibition by proteins MinC and MinD at internal division sites while permitting inhibition at polar sites. This ensures cell division at the proper site by restricting the formation of a division septum at the midpoint of the long axis of the cell. This is Cell division topological specificity factor from Leptothrix cholodnii (strain ATCC 51168 / LMG 8142 / SP-6) (Leptothrix discophora (strain SP-6)).